The chain runs to 116 residues: Iron-sulfur cluster insertion protein ErpA (116 aa).

Iron-sulfur cluster-binding residues include Cys44, Cys108, and Cys110.

Belongs to the HesB/IscA family. Homodimer. Requires iron-sulfur cluster as cofactor.

Its function is as follows. Required for insertion of 4Fe-4S clusters for at least IspG. The protein is Iron-sulfur cluster insertion protein ErpA of Shewanella halifaxensis (strain HAW-EB4).